The primary structure comprises 123 residues: Large ribosomal subunit protein bL20 (123 aa).

Belongs to the bacterial ribosomal protein bL20 family.

Functionally, binds directly to 23S ribosomal RNA and is necessary for the in vitro assembly process of the 50S ribosomal subunit. It is not involved in the protein synthesizing functions of that subunit. This is Large ribosomal subunit protein bL20 (rplT) from Chlamydia trachomatis serovar D (strain ATCC VR-885 / DSM 19411 / UW-3/Cx).